We begin with the raw amino-acid sequence, 70 residues long: MSSVRVKENEPFDVALRRFKRMIEKTGLLTDLRAREYYEKPTWERKRKAAAAVKRHYRRIRSQTLPTKLY.

The protein belongs to the bacterial ribosomal protein bS21 family.

In Methylobacillus flagellatus (strain ATCC 51484 / DSM 6875 / VKM B-1610 / KT), this protein is Small ribosomal subunit protein bS21.